The sequence spans 532 residues: Putative cysteine ligase BshC (532 aa).

Residues 431–451 (MAQAKDALAKVDASLVEAAER) adopt a coiled-coil conformation.

It belongs to the BshC family.

The polypeptide is Putative cysteine ligase BshC (Koribacter versatilis (strain Ellin345)).